Here is a 377-residue protein sequence, read N- to C-terminus: Multiple sugar-binding transport ATP-binding protein MsmK (377 aa).

One can recognise an ABC transporter domain in the interval 4–246; that stretch reads LNLNHIYKKY…PANKFVAGFI (243 aa). 38–45 is an ATP binding site; that stretch reads GPSGCGKS.

It belongs to the ABC transporter superfamily.

Its subcellular location is the cell membrane. In terms of biological role, involved in a binding protein-dependent transport system responsible for the uptake of melibiose, raffinose and isomaltotriose. Probably responsible for energy coupling to the transport system. The protein is Multiple sugar-binding transport ATP-binding protein MsmK (msmK) of Streptococcus mutans serotype c (strain ATCC 700610 / UA159).